The sequence spans 109 residues: Flagellar hook-basal body complex protein FliE 2 (109 aa).

This sequence belongs to the FliE family.

Its subcellular location is the bacterial flagellum basal body. This is Flagellar hook-basal body complex protein FliE 2 (fliE2) from Bradyrhizobium diazoefficiens (strain JCM 10833 / BCRC 13528 / IAM 13628 / NBRC 14792 / USDA 110).